The chain runs to 226 residues: Urease accessory protein UreF (226 aa).

The protein belongs to the UreF family. UreD, UreF and UreG form a complex that acts as a GTP-hydrolysis-dependent molecular chaperone, activating the urease apoprotein by helping to assemble the nickel containing metallocenter of UreC. The UreE protein probably delivers the nickel.

Its subcellular location is the cytoplasm. Functionally, required for maturation of urease via the functional incorporation of the urease nickel metallocenter. The chain is Urease accessory protein UreF from Burkholderia multivorans (strain ATCC 17616 / 249).